The sequence spans 1013 residues: Poly [ADP-ribose] polymerase 1 (1013 aa).

PARP-type zinc fingers lie at residues 10–92 (YKAE…ESGG) and 113–203 (FAVE…PAVK). Residues Cys-22, Cys-25, His-54, Cys-57, Cys-125, Cys-128, His-159, and Cys-162 each contribute to the Zn(2+) site. The segment at 202 to 228 (VKSEGKRKADEVDGGVSKKQKKEDEKL) is disordered. The Nuclear localization signal signature appears at 207–209 (KRK). The PADR1 zinc-binding domain occupies 219 to 353 (KKQKKEDEKL…FKRQDRVFPK (135 aa)). The zinc ribbon stretch occupies residues 284–326 (GSLKPCETCKGQLVFKSDAYYCTGDISAWTKCVFKTQTPDRKD). The Zn(2+) site is built by Cys-289, Cys-292, Cys-305, and Cys-315. The tract at residues 353–385 (KDAPPAAATPSSGSTTSAATSVSSASKNLTEAP) is disordered. Residues 356–378 (PPAAATPSSGSTTSAATSVSSAS) are compositionally biased toward low complexity. Residues 365 to 523 (GSTTSAATSV…EGGSKSKKMK (159 aa)) form an automodification domain region. Residues 385-461 (PADKPLTGMK…RVVADDFLTD (77 aa)) form the BRCT domain. Residues Glu-413, Glu-435, Glu-444, Glu-445, Glu-464, Glu-471, Glu-484, and Glu-488 each carry the polyADP-ribosyl glutamic acid modification. A compositionally biased stretch (low complexity) spans 494-507 (AATKSTGAHSSKST). The tract at residues 494–522 (AATKSTGAHSSKSTGKVKEEEGGSKSKKM) is disordered. PolyADP-ribosyl glutamic acid occurs at positions 512 and 513. Positions 541–637 (CAHVLEQNGK…SNFTKYPNKF (97 aa)) constitute a WGR domain. The region spanning 661 to 778 (KSQLEKPVQD…DIEVAYSLLR (118 aa)) is the PARP alpha-helical domain. Residues 787–1013 (DPIDINYEKL…IRFNYQTSLW (227 aa)) form the PARP catalytic domain. Residues 861–863 (HGS), Gly-870, Arg-877, and Ser-903 each bind NAD(+). The active-site For poly [ADP-ribose] polymerase activity is Glu-987.

This sequence belongs to the ARTD/PARP family. As to quaternary structure, homodimer; PARP-type zinc-fingers from separate parp1 molecules form a dimer module that specifically recognizes DNA strand breaks. Poly-ADP-ribosylated on serine, glutamate and aspartate residues by autocatalysis. Auto-ADP-ribosylation on serine takes place following interaction with HPF1. Auto poly-ADP-ribosylation on serine residues promotes its dissociation from chromatin.

Its subcellular location is the chromosome. It is found in the nucleus. The protein localises to the nucleolus. It localises to the cytoplasm. The protein resides in the cytosol. It catalyses the reaction NAD(+) + (ADP-D-ribosyl)n-acceptor = nicotinamide + (ADP-D-ribosyl)n+1-acceptor + H(+).. It carries out the reaction L-seryl-[protein] + NAD(+) = O-(ADP-D-ribosyl)-L-seryl-[protein] + nicotinamide + H(+). The enzyme catalyses L-aspartyl-[protein] + NAD(+) = 4-O-(ADP-D-ribosyl)-L-aspartyl-[protein] + nicotinamide. The catalysed reaction is L-glutamyl-[protein] + NAD(+) = 5-O-(ADP-D-ribosyl)-L-glutamyl-[protein] + nicotinamide. It catalyses the reaction L-tyrosyl-[protein] + NAD(+) = O-(ADP-D-ribosyl)-L-tyrosyl-[protein] + nicotinamide + H(+). It carries out the reaction L-histidyl-[protein] + NAD(+) = N(tele)-(ADP-D-ribosyl)-L-histidyl-[protein] + nicotinamide + H(+). ADP-ribosyltransferase activity is regulated via an allosteric activation mechanism. In absence of activation signal, parp1 is autoinhibited by the PARP alpha-helical domain (also named HD region), which prevents effective NAD(+)-binding. Activity is highly stimulated by signals, such as DNA strand breaks. Binding to damaged DNA unfolds the PARP alpha-helical domain, relieving autoinhibition. Poly-ADP-ribosyltransferase activity is tightly regulated and parp1 is removed from damaged chromatin following initial poly-ADP-ribosylation of chromatin to avoid prolonged residence (trapping) that has cytotoxic consequences. A number of factors or post-translational modifications (auto-poly-ADP-ribosylation) promote parp1 removal from chromatin. Its function is as follows. Poly-ADP-ribosyltransferase that mediates poly-ADP-ribosylation of proteins and plays a key role in DNA repair. Mediates glutamate, aspartate, serine, histidine or tyrosine ADP-ribosylation of proteins: the ADP-D-ribosyl group of NAD(+) is transferred to the acceptor carboxyl group of target residues and further ADP-ribosyl groups are transferred to the 2'-position of the terminal adenosine moiety, building up a polymer with an average chain length of 20-30 units. Serine ADP-ribosylation of proteins constitutes the primary form of ADP-ribosylation of proteins in response to DNA damage. Specificity for the different amino acids is conferred by interacting factors, such as hpf1 and nmnat1. Following interaction with hpf1, catalyzes serine ADP-ribosylation of target proteins; hpf1 confers serine specificity by completing the parp1 active site. Also catalyzes tyrosine ADP-ribosylation of target proteins following interaction with hpf1. Following interaction with nmnat1, catalyzes glutamate and aspartate ADP-ribosylation of target proteins; nmnat1 confers glutamate and aspartate specificity. Parp1 initiates the repair of DNA breaks: recognizes and binds DNA breaks within chromatin and recruits hpf1, licensing serine ADP-ribosylation of target proteins, such as histones (H2BS6ADPr and H3S10ADPr), thereby promoting decompaction of chromatin and the recruitment of repair factors leading to the reparation of DNA strand breaks. In addition to base excision repair (BER) pathway, also involved in double-strand breaks (DSBs) repair. Mediates the poly-ADP-ribosylation of a number of proteins. In addition to proteins, also able to ADP-ribosylate DNA: catalyzes ADP-ribosylation of DNA strand break termini containing terminal phosphates and a 2'-OH group in single- and double-stranded DNA, respectively. Parp1-mediated DNA repair in neurons plays a role in sleep: senses DNA damage in neurons and promotes sleep, facilitating efficient DNA repair. In addition to DNA repair, also involved in other processes, such as transcription regulation, programmed cell death, membrane repair, adipogenesis and innate immunity. Acts as a repressor of transcription: binds to nucleosomes and modulates chromatin structure in a manner similar to histone H1, thereby altering RNA polymerase II. Acts both as a positive and negative regulator of transcription elongation, depending on the context. Poly-ADP-ribose chains generated by parp1 also play a role in poly-ADP-ribose-dependent cell death, a process named parthanatos. Also acts as a negative regulator of the cGAS-STING pathway by mediating poly-ADP-ribosylation and inactivation of cgas. Acts as a negative regulator of adipogenesis by catalyzing poly ADP-ribosylation of histone H2B on 'Glu-35' (H2BE35ADPr). The protein is Poly [ADP-ribose] polymerase 1 of Danio rerio (Zebrafish).